We begin with the raw amino-acid sequence, 807 residues long: Glycerol-3-phosphate acyltransferase (807 aa).

Positions 308–313 (CHRSHM) match the HXXXXD motif motif.

It belongs to the GPAT/DAPAT family.

It localises to the cell inner membrane. It catalyses the reaction sn-glycerol 3-phosphate + an acyl-CoA = a 1-acyl-sn-glycero-3-phosphate + CoA. The protein operates within phospholipid metabolism; CDP-diacylglycerol biosynthesis; CDP-diacylglycerol from sn-glycerol 3-phosphate: step 1/3. The chain is Glycerol-3-phosphate acyltransferase from Shewanella woodyi (strain ATCC 51908 / MS32).